Here is a 343-residue protein sequence, read N- to C-terminus: Mitochondrial import inner membrane translocase subunit TIM50-A (343 aa).

Residues 1 to 57 (MHKIVWFGTLNKSIGYIGKKKTCLLSPCEKICLNSARKTVQRCDKNYSPPKLRRIKN) lie on the Mitochondrial matrix side of the membrane. A helical transmembrane segment spans residues 58–77 (FYTYSVVLGSLFSIVMWAIY). Topologically, residues 78-343 (KLGKPEEDHR…GRSLRGSSIK (266 aa)) are mitochondrial intermembrane. Positions 135–278 (YIQPPYSLVL…FDLTAFLQLI (144 aa)) constitute an FCP1 homology domain.

It belongs to the TIM50 family. Component of the TIM23 complex at least composed of Tim23, Tim17 (Tim17a1, Tim17a2 or Tim17b1) and a Tim50. Exclusively expressed in the testis.

The protein resides in the mitochondrion inner membrane. In terms of biological role, essential component of the TIM23 complex, a complex that mediates the translocation of transit peptide-containing proteins across the mitochondrial inner membrane. This chain is Mitochondrial import inner membrane translocase subunit TIM50-A (ttm3), found in Drosophila melanogaster (Fruit fly).